Here is a 146-residue protein sequence, read N- to C-terminus: Small ribosomal subunit protein uS13 (146 aa).

Residues 119–146 form a disordered region; it reads ARGKKVRGQRTRSTGRKGRTVGVVRRKR.

Belongs to the universal ribosomal protein uS13 family. Part of the 30S ribosomal subunit. Forms a loose heterodimer with protein S19. Forms two bridges to the 50S subunit in the 70S ribosome.

Its function is as follows. Located at the top of the head of the 30S subunit, it contacts several helices of the 16S rRNA. In the 70S ribosome it contacts the 23S rRNA (bridge B1a) and protein L5 of the 50S subunit (bridge B1b), connecting the 2 subunits; these bridges are implicated in subunit movement. This chain is Small ribosomal subunit protein uS13, found in Archaeoglobus fulgidus (strain ATCC 49558 / DSM 4304 / JCM 9628 / NBRC 100126 / VC-16).